The chain runs to 149 residues: Transcriptional repressor NrdR (149 aa).

A zinc finger spans residues 3–34; the sequence is CPFCSATDTKVIDSRLVADGHQVRRRRECTEC. One can recognise an ATP-cone domain in the interval 49–139; the sequence is PRVIKRDGTR…VYRAFEDVSQ (91 aa).

Belongs to the NrdR family. Zn(2+) is required as a cofactor.

Its function is as follows. Negatively regulates transcription of bacterial ribonucleotide reductase nrd genes and operons by binding to NrdR-boxes. This chain is Transcriptional repressor NrdR, found in Shewanella frigidimarina (strain NCIMB 400).